The primary structure comprises 449 residues: Phosphoglucosamine mutase (449 aa).

Ser-100 functions as the Phosphoserine intermediate in the catalytic mechanism. Positions 100, 241, 243, and 245 each coordinate Mg(2+). At Ser-100 the chain carries Phosphoserine.

Belongs to the phosphohexose mutase family. It depends on Mg(2+) as a cofactor. Activated by phosphorylation.

It catalyses the reaction alpha-D-glucosamine 1-phosphate = D-glucosamine 6-phosphate. In terms of biological role, catalyzes the conversion of glucosamine-6-phosphate to glucosamine-1-phosphate. The polypeptide is Phosphoglucosamine mutase (Geobacillus kaustophilus (strain HTA426)).